Reading from the N-terminus, the 592-residue chain is UvrABC system protein C (592 aa).

Residues Lys-14–Ile-91 enclose the GIY-YIG domain. In terms of domain architecture, UVR spans Asp-197–Ile-232.

The protein belongs to the UvrC family. In terms of assembly, interacts with UvrB in an incision complex.

The protein resides in the cytoplasm. In terms of biological role, the UvrABC repair system catalyzes the recognition and processing of DNA lesions. UvrC both incises the 5' and 3' sides of the lesion. The N-terminal half is responsible for the 3' incision and the C-terminal half is responsible for the 5' incision. The protein is UvrABC system protein C of Mycoplasmoides gallisepticum (strain R(low / passage 15 / clone 2)) (Mycoplasma gallisepticum).